A 377-amino-acid polypeptide reads, in one-letter code: Membrane progestin receptor epsilon (377 aa).

A disordered region spans residues 1–40 (MPRRLQPRGAGTKGPPAPAPAASGAARNSHSAASRDPPAS). Topologically, residues 1–86 (MPRRLQPRGA…VLKPTNETLN (86 aa)) are cytoplasmic. Low complexity predominate over residues 9–26 (GAGTKGPPAPAPAASGAA). The chain crosses the membrane as a helical span at residues 87 to 107 (FWTHFIPLLLFLSKFCRLFFL). The Extracellular segment spans residues 108–116 (SGGDVPFHH). The helical transmembrane segment at 117 to 137 (PWLLPLWCYASGVLLTFAMSC) threads the bilayer. The Cytoplasmic portion of the chain corresponds to 138–162 (TAHVFSCLSLRLRAAFFYLDYASIS). Residues 163–183 (YYGFGSTVAYYYYLLPGLSLL) form a helical membrane-spanning segment. Residues 184–205 (DARVMTPYLQQRLGWHVDCTRL) lie on the Extracellular side of the membrane. Residues 206-226 (IAAYRALVLPVAFVLAVACTV) form a helical membrane-spanning segment. The Cytoplasmic segment spans residues 227 to 243 (ACCKSRTDWCTYPFALR). A helical membrane pass occupies residues 244–264 (TFVFVMPLSMACPIMLESWLF). At 265 to 301 (DLRGENPTLFVHFYRRYFWLVVAAFFNVSKIPERIQP) the chain is on the extracellular side. A helical transmembrane segment spans residues 302 to 322 (GLFDIIGHSHQLFHIFTFLSI). At 323–343 (YDQVYYVEEGLRQFLQAPPAA) the chain is on the cytoplasmic side. The helical transmembrane segment at 344-364 (PTFSGTVGYMLLLVVCLGLVI) threads the bilayer. Over 365-377 (RKFLNSSEFCSKK) the chain is Extracellular.

It belongs to the ADIPOR family. In terms of assembly, homodimer. As to expression, expression levels vary widely in a range of tissues. Expressed in the brain, at high level in the pituitary gland and also in hypothalamus, limbic system, caudate nucleus accumens, pons and olfactory bulb.

It localises to the cell membrane. Plasma membrane progesterone (P4) receptor coupled to G proteins. Seems to act through a G(s) mediated pathway. May be involved in regulating rapid P4 signaling in the nervous system. Also binds dehydroepiandrosterone (DHEA), pregnanolone, pregnenolone and allopregnanolone. The chain is Membrane progestin receptor epsilon from Homo sapiens (Human).